The primary structure comprises 630 residues: Transferrin-binding protein B (630 aa).

A signal peptide spans 1–17; sequence MKSVPLITGGLSFLLSA. Cys18 is lipidated: N-palmitoyl cysteine. Cys18 carries the S-diacylglycerol cysteine lipid modification. Disordered regions lie at residues 26-53, 280-301, and 591-613; these read DVDD…KSNL, VTPT…LEGG, and NNPT…SPNA. Residues 32–50 are compositionally biased toward polar residues; the sequence is NPSSSKPRYQDDTSSSRTK.

The protein belongs to the TbpB family.

It localises to the cell outer membrane. The protein resides in the cell surface. Its function is as follows. Haemophilus acquires iron by extracting it from serum transferrin (TF) in its human host. Acts as a transferrin receptor and is required for transferrin utilization. The protein is Transferrin-binding protein B of Haemophilus influenzae (strain 86-028NP).